We begin with the raw amino-acid sequence, 106 residues long: Iron-sulfur cluster assembly protein CyaY (106 aa).

This sequence belongs to the frataxin family.

In terms of biological role, involved in iron-sulfur (Fe-S) cluster assembly. May act as a regulator of Fe-S biogenesis. The chain is Iron-sulfur cluster assembly protein CyaY from Salmonella agona (strain SL483).